A 675-amino-acid chain; its full sequence is Pescadillo homolog (675 aa).

A disordered region spans residues 309 to 331; it reads AGLDEAKEEPAAETTEESSETID. The 120-residue stretch at 352-471 folds into the BRCT domain; the sequence is EAGSLFAPFT…RLVRPDLYAP (120 aa). Residues 475–675 form a disordered region; it reads LPPHLSPWVK…RRKLEKGAAK (201 aa). The span at 498–518 shows a compositional bias: acidic residues; it reads EQEEEGEAELDEDSDEEMEEA. The segment covering 519 to 530 has biased composition (basic and acidic residues); it reads TSDKKAEAKADV. Acidic residues-rich tracts occupy residues 532–541 and 549–580; these read SESEDEDESV and GTDD…DEEE. The stretch at 551–675 forms a coiled coil; the sequence is DDDESESEDE…RRKLEKGAAK (125 aa). The segment covering 581 to 591 has biased composition (basic and acidic residues); it reads AARTQHQKELE. The span at 611 to 623 shows a compositional bias: basic residues; the sequence is KKASQAKKIAAKK. The segment covering 624 to 634 has biased composition (basic and acidic residues); it reads RKEEEELERQK.

The protein belongs to the pescadillo family. As to quaternary structure, component of the NOP7 complex, composed of erb1, nop7 and ytm1. The complex is held together by erb1, which interacts with nop7 via its N-terminal domain and with ytm1 via a high-affinity interaction between the seven-bladed beta-propeller domains of the 2 proteins. The NOP7 complex associates with the 66S pre-ribosome.

The protein localises to the nucleus. It localises to the nucleolus. Its subcellular location is the nucleoplasm. In terms of biological role, component of the NOP7 complex, which is required for maturation of the 25S and 5.8S ribosomal RNAs and formation of the 60S ribosome. This Aspergillus fumigatus (strain CBS 144.89 / FGSC A1163 / CEA10) (Neosartorya fumigata) protein is Pescadillo homolog (nop7).